We begin with the raw amino-acid sequence, 238 residues long: Flagellar L-ring protein (238 aa).

Positions 1 to 16 (MNKAILAVAMVLLLAG) are cleaved as a signal peptide. C17 is lipidated: N-palmitoyl cysteine. Residue C17 is the site of S-diacylglycerol cysteine attachment.

This sequence belongs to the FlgH family. In terms of assembly, the basal body constitutes a major portion of the flagellar organelle and consists of four rings (L,P,S, and M) mounted on a central rod.

It localises to the cell outer membrane. The protein resides in the bacterial flagellum basal body. Its function is as follows. Assembles around the rod to form the L-ring and probably protects the motor/basal body from shearing forces during rotation. The chain is Flagellar L-ring protein from Brucella abortus (strain 2308).